The sequence spans 207 residues: Redox-sensing transcriptional repressor Rex (207 aa).

A DNA-binding region (H-T-H motif) is located at residues 17–56 (IYLRYLSYLQQVEVTTVSSQQMGKNLDVNPAQIRKDLAAF). 91-96 (GAGHLG) provides a ligand contact to NAD(+).

It belongs to the transcriptional regulatory Rex family. As to quaternary structure, homodimer.

It localises to the cytoplasm. Its function is as follows. Modulates transcription in response to changes in cellular NADH/NAD(+) redox state. In Brevibacillus brevis (strain 47 / JCM 6285 / NBRC 100599), this protein is Redox-sensing transcriptional repressor Rex.